A 1129-amino-acid polypeptide reads, in one-letter code: MNSTVVVKRLQPNNGNINPRNNCSLSSMDKKNLLQKSSSYNRNRDISYALCKELNENLRVRGGLFQSESAVKARRHTLPHSSHRRSPERRNSLLFQQRPRNSSGQFTHNPNQKKDRMDNRDHKTSIKKELNNLNTMTSPEGRLSLSAKRKSEASTGSERETKRPRVDIQATSSSSILNSPPKFIRRAFLKSCNESVITIKETNSPIKPSISDNKPKLSSSLPRQLFCADSNAHSSQTTKSPTNAEPKDAMVARANKNPKAPPSQPHLRKVSPKSSMTFDSIETHFTPDNCASVAKMSKKTNGETEIIALSTNTSSSSHYKESVTGRSSPHQHDLSSTSFTEQASSCKMELDERAPMKAEQSRSPEAIPAVTVKVEGSGEHKCFPQWKDPLDIELGDDWDDELREHCVISLSSSSSSHEDEQLPSLKEILDWTVRVPVTPEKDAYSEPNTPVLKAVPEAVKTKATSYRNTLEQMLQEKEQYQRSKELERQLLESCEEDLMNLDEDENSESKGEDISLEHREILQRFSVTSCAIRDIHPGEEIFTPAKFGQLFNHQTLDLRKISVTPHNRSQQILLQARSEHVLSLISAGLLRKAYFSFPCQPEVTRWLFQMTSVHPNPIISSRIMQSLHTIALSAAQHIVEHKSQSFTVWVPSIRDITQVFLNMGASFISLFPLDVLQPPFTEGDLLEDFKPEENSQDSAISEIKDDATLPVHNLESVLSYLSLCTALCPKAYTDEELLLLLAVVCRIGLETHFQLLPTGSFSLLLQNVLKNITDWDVQISKACQILTDLSEDHHNLRRIVSILPESSRGKLLKRHLSVSIISKLLNHTCTYNPSGTDFKLSELKPFLPQMRPSSLLKSLSSARGSEDCDATLDQQAYYLCYSLLTLTNEASNFEFLPSAQRNDLRCLSSLLEKHIKCDIRESEKMLYRSKVKDFVARIYTKWQVLLTRTRPQEGMLYDYWKPPPEDELPSSPQGQTCIKAQDPQESPEEAPTPEWSSSESEEDDQSKDEEEEDWLKDPDNLQPLENQVKMEQSAEDCVEDVSDAEEESDVPKQQLEGFDISGALEDISEEELFEDDEDLLNEEEKQLLKDEEDRKHRPVEEASQQIEDLLAKHKDTLEMKDGMLLDAFI.

Disordered regions lie at residues 71 to 178, 312 to 343, and 955 to 1057; these read VKAR…SILN, NTSSSSHYKESVTGRSSPHQHDLSSTSFTEQA, and MLYD…QLEG. The segment covering 72 to 87 has biased composition (basic residues); that stretch reads KARRHTLPHSSHRRSP. Over residues 93–110 the composition is skewed to polar residues; the sequence is LLFQQRPRNSSGQFTHNP. Basic and acidic residues-rich tracts occupy residues 112-130 and 149-166; these read QKKDRMDNRDHKTSIKKEL and RKSEASTGSERETKRPRV. 2 stretches are compositionally biased toward polar residues: residues 169–178 and 324–343; these read QATSSSSILN and TGRSSPHQHDLSSTSFTEQA. Composition is skewed to acidic residues over residues 999-1014 and 1033-1048; these read ESEEDDQSKDEEEEDW and SAEDCVEDVSDAEEES.

The protein belongs to the FAM178 family.

Its subcellular location is the nucleus. Its function is as follows. Plays a role in the DNA damage response (DDR) pathway by regulating postreplication repair of UV-damaged DNA and genomic stability maintenance. Promotes the recruitment of the SMC5-SMC6 complex to DNA lesions. This chain is SMC5-SMC6 complex localization factor protein 2 (slf2), found in Danio rerio (Zebrafish).